A 159-amino-acid polypeptide reads, in one-letter code: 2-C-methyl-D-erythritol 2,4-cyclodiphosphate synthase (159 aa).

The a divalent metal cation site is built by aspartate 8 and histidine 10. Residues 8–10 (DVH) and 34–35 (HS) contribute to the 4-CDP-2-C-methyl-D-erythritol 2-phosphate site. Histidine 42 is an a divalent metal cation binding site. 4-CDP-2-C-methyl-D-erythritol 2-phosphate is bound by residues 56–58 (DIG), 61–65 (FPDTD), 100–106 (AQAPKMA), 132–135 (TTTE), phenylalanine 139, and arginine 142.

It belongs to the IspF family. As to quaternary structure, homotrimer. Requires a divalent metal cation as cofactor.

The enzyme catalyses 4-CDP-2-C-methyl-D-erythritol 2-phosphate = 2-C-methyl-D-erythritol 2,4-cyclic diphosphate + CMP. The protein operates within isoprenoid biosynthesis; isopentenyl diphosphate biosynthesis via DXP pathway; isopentenyl diphosphate from 1-deoxy-D-xylulose 5-phosphate: step 4/6. Functionally, involved in the biosynthesis of isopentenyl diphosphate (IPP) and dimethylallyl diphosphate (DMAPP), two major building blocks of isoprenoid compounds. Catalyzes the conversion of 4-diphosphocytidyl-2-C-methyl-D-erythritol 2-phosphate (CDP-ME2P) to 2-C-methyl-D-erythritol 2,4-cyclodiphosphate (ME-CPP) with a corresponding release of cytidine 5-monophosphate (CMP). The protein is 2-C-methyl-D-erythritol 2,4-cyclodiphosphate synthase of Cronobacter sakazakii (strain ATCC BAA-894) (Enterobacter sakazakii).